The chain runs to 321 residues: F420-non-reducing hydrogenase iron-sulfur subunit G (321 aa).

This sequence belongs to the [NiFe]/[NiFeSe] hydrogenase small subunit family. The F420-non-reducing hydrogenase is composed of three subunits; MvhA, MvhD and MvhG. It forms a complex with the heterodisulfide reductase (Hdr).

The protein resides in the cytoplasm. Part of a complex that provides reducing equivalents for heterodisulfide reductase. This is F420-non-reducing hydrogenase iron-sulfur subunit G (mvhG) from Archaeoglobus profundus (strain DSM 5631 / JCM 9629 / NBRC 100127 / Av18).